The sequence spans 320 residues: Arginine/serine-rich protein 1 (320 aa).

The span at 1–22 shows a compositional bias: basic and acidic residues; sequence MKTEASPGRLHEDVKLIFDKKA. Disordered stretches follow at residues 1–180 and 215–299; these read MKTE…SRER and LKEM…ADIV. Composition is skewed to low complexity over residues 24–48 and 56–74; these read SGRSSSCSSSSSSSSGSSYSSSRGS and TSSSSRSSSSGSSSSSNSR. Basic residues-rich tracts occupy residues 75–102, 114–158, and 166–175; these read SRSRPRCSGRVHCRHRHRSPPRRYRARS, RRRH…RYRC, and RSPRPYRSRS. Phosphoserine occurs at positions 135 and 137. Over residues 215–238 the composition is skewed to basic and acidic residues; sequence LKEMEQQEERKRRSSSDEEERVRV. The span at 271 to 293 shows a compositional bias: polar residues; that stretch reads VFSNNNAIAKPSSSPTLSDSKVT.

Belongs to the RSRP family. In terms of processing, phosphorylated. Phosphorylation at Ser-135 and Ser-137 mediates the interaction with spliceosome proteins.

The protein localises to the nucleus. Probably acts as a spliceosomal factor that contributes to spliceosome assembly and regulates the isoform switching of proteins such as PARP6. The protein is Arginine/serine-rich protein 1 (rsrp1) of Danio rerio (Zebrafish).